The sequence spans 298 residues: Lysozyme-like protein 1 (298 aa).

An N-terminal signal peptide occupies residues 1-16 (MLKLAFVTFLFALASA). Residues 59–277 (YAYAVDISVP…AAASSKNTDF (219 aa)) enclose the Ch-type lysozyme domain.

The protein belongs to the glycosyl hydrolase 25 family. In terms of tissue distribution, expressed in intestine, IL2 and IL6 neurons and some neurons in the head ganglia.

It localises to the cytoplasmic vesicle lumen. Its function is as follows. Involved in resistance to Gram-negative bacterium S.marcescens and to bacterium Gram-positive S.aureus infection. The polypeptide is Lysozyme-like protein 1 (Caenorhabditis elegans).